A 972-amino-acid chain; its full sequence is 116 kDa U5 small nuclear ribonucleoprotein component (972 aa).

N-acetylmethionine is present on M1. Residues 1-54 form a disordered region; the sequence is MDTDLYDEFGNYIGPELDSDEDDDELGRETKDLDEMDDDDDDDDVGDHDDDHPG. Acidic residues-rich tracts occupy residues 17–26 and 34–48; these read LDSDEDDDEL and DEMD…VGDH. At S19 the chain carries Phosphoserine. A Glycyl lysine isopeptide (Lys-Gly) (interchain with G-Cter in SUMO1); alternate cross-link involves residue K64. Residue K64 forms a Glycyl lysine isopeptide (Lys-Gly) (interchain with G-Cter in SUMO2); alternate linkage. T86 carries the post-translational modification Phosphothreonine. Residues 127–409 enclose the tr-type G domain; sequence ELIRNVTLCG…GIHLTKEELK (283 aa). GTP contacts are provided by residues 136–143, 204–208, and 258–261; these read GHLHHGKT, DTPGH, and NKID.

This sequence belongs to the TRAFAC class translation factor GTPase superfamily. Classic translation factor GTPase family. EF-G/EF-2 subfamily. As to quaternary structure, component of the U5 snRNP and the U4/U6-U5 tri-snRNP complex, a building block of the spliceosome. The U4/U6-U5 tri-snRNP complex is composed of the U4, U6 and U5 snRNAs and at least PRPF3, PRPF4, PRPF6, PRPF8, PRPF31, SNRNP200, TXNL4A, SNRNP40, DDX23, CD2BP2, PPIH, SNU13, EFTUD2, SART1 and USP39. Component of the pre-catalytic, catalytic and post-catalytic spliceosome complexes. Component of the minor spliceosome, which splices U12-type introns. Within this complex, interacts with CRIPT. Interacts with ERBB4 and PRPF8. Interacts with PIH1D1. Interacts with RPAP3 and URI1 in a ZNHIT2-dependent manner. Interacts with NRDE2. Interacts with FAM50A. Interacts with UBL5.

The protein localises to the nucleus. Its function is as follows. Required for pre-mRNA splicing as component of the spliceosome, including pre-catalytic, catalytic and post-catalytic spliceosomal complexes. Component of the U5 snRNP and the U4/U6-U5 tri-snRNP complex, a building block of the spliceosome. As a component of the minor spliceosome, involved in the splicing of U12-type introns in pre-mRNAs. In Homo sapiens (Human), this protein is 116 kDa U5 small nuclear ribonucleoprotein component (EFTUD2).